A 333-amino-acid polypeptide reads, in one-letter code: Nucleoid-associated protein PSPTO_1265 (333 aa).

It belongs to the YejK family.

It localises to the cytoplasm. It is found in the nucleoid. In Pseudomonas syringae pv. tomato (strain ATCC BAA-871 / DC3000), this protein is Nucleoid-associated protein PSPTO_1265.